The primary structure comprises 486 residues: Transcriptional regulator ERG (486 aa).

Positions threonine 41–methionine 54 are enriched in polar residues. 2 disordered regions span residues threonine 41–aspartate 62 and proline 79–lysine 99. Phosphoserine occurs at positions 55, 88, and 103. The region spanning valine 120–proline 206 is the PNT domain. Residues glutamine 249–alanine 311 form a disordered region. Positions serine 271–proline 284 are enriched in polar residues. Residue lysine 289 forms a Glycyl lysine isopeptide (Lys-Gly) (interchain with G-Cter in SUMO2) linkage. Residues isoleucine 318–aspartate 398 constitute a DNA-binding region (ETS).

The protein belongs to the ETS family. As to quaternary structure, identified in a IGF2BP1-dependent mRNP granule complex containing untranslated mRNAs. Interacts with SETDB1.

It is found in the nucleus. The protein localises to the cytoplasm. In terms of biological role, transcriptional regulator. May participate in transcriptional regulation through the recruitment of SETDB1 histone methyltransferase and subsequent modification of local chromatin structure. The protein is Transcriptional regulator ERG (Erg) of Mus musculus (Mouse).